Here is a 261-residue protein sequence, read N- to C-terminus: uncharacterized protein (261 aa).

A Response regulatory domain is found at 7 to 122; that stretch reads TAVLADDEPL…RLASCCEKLQ (116 aa). Aspartate 54 bears the 4-aspartylphosphate mark. An HTH LytTR-type domain is found at 157–261; sequence LKASKGEEIH…RALQHLFKVS (105 aa).

This is an uncharacterized protein from Vibrio cholerae serotype O1 (strain ATCC 39315 / El Tor Inaba N16961).